The following is a 702-amino-acid chain: Arylphorin subunit alpha (702 aa).

Positions 1 to 16 (MKTVVILAGLVALALS) are cleaved as a signal peptide. Asn75 and Asn214 each carry an N-linked (GlcNAc...) asparagine glycan.

The protein belongs to the hemocyanin family. In terms of assembly, arylphorin is a hexamer of subunits alpha and beta. In terms of tissue distribution, fat body.

The protein resides in the secreted. It localises to the extracellular space. Arylphorin is a larval storage protein (LSP) which may serve as a storage protein used primarily as a source of aromatic amino acids for protein synthesis during metamorphosis. It is a constituent of the sclerotizing system of the cuticle, and serves as a carrier for ecdysteroid hormone. The sequence is that of Arylphorin subunit alpha from Manduca sexta (Tobacco hawkmoth).